The primary structure comprises 750 residues: GRIP and coiled-coil domain-containing protein C27D7.02c (750 aa).

Disordered stretches follow at residues 14-53 (AQGQ…AKNM) and 188-280 (KTVE…RDIA). 2 stretches are compositionally biased toward basic and acidic residues: residues 18–34 (EEAK…DQLR) and 188–198 (KTVETKNDVPE). The stretch at 28 to 182 (QEEDQLRRNN…AQSIEQEVIS (155 aa)) forms a coiled coil. Residues 201–213 (RPSTDTIGVSSAL) show a composition bias toward polar residues. Residues 213 to 243 (LSKKKKKRNRKNQKKKSTKQNIEATTENDAL) are a coiled coil. The span at 214–230 (SKKKKKRNRKNQKKKST) shows a compositional bias: basic residues. A compositionally biased stretch (polar residues) spans 233–251 (NIEATTENDALSESISTPD). Positions 269–280 (ADSKEEERRDIA) are enriched in basic and acidic residues. A coiled-coil region spans residues 344-665 (KLVEELTKQL…YEHLQKSFKN (322 aa)). The disordered stretch occupies residues 672 to 703 (KQQPSNHGRNSSVSRSSSSVEVNSKHPGSDDM). The segment covering 676–693 (SNHGRNSSVSRSSSSVEV) has biased composition (low complexity). Positions 694-703 (NSKHPGSDDM) are enriched in basic and acidic residues. Residues 700–748 (SDDMLIDKEYTRNILFQFLEQRDRRPEIVNLLSILLDLSEEQKQKLLSV) form the GRIP domain.

It localises to the cytoplasm. In Schizosaccharomyces pombe (strain 972 / ATCC 24843) (Fission yeast), this protein is GRIP and coiled-coil domain-containing protein C27D7.02c.